Consider the following 514-residue polypeptide: Triacylglyceride transporter MAB_2807 (514 aa).

A run of 11 helical transmembrane segments spans residues 19 to 39, 58 to 78, 88 to 108, 118 to 138, 157 to 177, 178 to 198, 210 to 230, 239 to 259, 278 to 298, 316 to 336, and 344 to 364; these read IAIG…YVVV, QVTP…PLLG, LILQ…ALST, VIQG…GADL, LGSV…GSWT, AIFW…QFSV, VDVV…VGLY, LPEW…AFIL, PFFA…VTLV, VFLL…GGWL, and IIAV…SGWP. Positions 371–380 are beta-hairpin; sequence VHNFGFFTLP. 3 consecutive transmembrane segments (helical) span residues 385-405, 420-440, and 485-505; these read DLVV…SAAL, VVVA…GWGI, and MFAI…FVGS.

It belongs to the major facilitator superfamily. P55 (TC 2.A.1.3.34) family.

It is found in the cell inner membrane. In association with lipoprotein LprG probably transports triacyglycerides (TAG) across the inner cell membrane into the periplasm; TAG probably regulates lipid metabolism and growth regulation and plays a structural role in the outer membrane. TAG (and maybe other lipids) enters the central cavity of the P55 transporter from within the cell inner membrane via clefts on the cytoplasmic face of P55 between TM5-TM8 and TM2-TM11. From there the lipid is probably transferred to the hydrophobic cavity of LprG. Involved in drug susceptibilty, its expression partially complements the antibiotic susceptibilty of a double lprG-mfs deletion. Probably does not function as a bona fide drug efflux pump, but instead plays a role in outer membrane biogenesis. Probably required with LprG for normal surface localization of lipoarabinomannan (LAM). This chain is Triacylglyceride transporter MAB_2807, found in Mycobacteroides abscessus (strain ATCC 19977 / DSM 44196 / CCUG 20993 / CIP 104536 / JCM 13569 / NCTC 13031 / TMC 1543 / L948) (Mycobacterium abscessus).